The following is a 446-amino-acid chain: UDP-N-acetylglucosamine--dolichyl-phosphate N-acetylglucosaminephosphotransferase (446 aa).

Transmembrane regions (helical) follow at residues 1 to 21 (MIES…LMNQ) and 25 to 45 (PLLS…MFIP). Residues 59 to 61 (KDM) and E71 each bind UDP-N-acetyl-alpha-D-glucosamine. 2 helical membrane passes run 73-93 (MGAV…PVLF) and 123-143 (LLGA…LGIL). K154 lines the dolichyl phosphate pocket. Transmembrane regions (helical) follow at residues 155–175 (FFLP…DYGV) and 191–211 (SLIN…IFCP). Dolichyl phosphate is bound at residue 208 to 216 (IFCPNSINI). N215 serves as a coordination point for Mg(2+). Helical transmembrane passes span 216–236 (IIAG…LVIA), 254–274 (AHLL…GLLK), 282–302 (VFVG…VGIL), and 311–331 (LFFI…FGLV). N221 is a binding site for UDP-N-acetyl-alpha-D-glucosamine. Residue D286 coordinates Mg(2+). 335–337 (RHR) serves as a coordination point for UDP-N-acetyl-alpha-D-glucosamine. A glycan (N-linked (GlcNAc...) asparagine) is linked at N395. The chain crosses the membrane as a helical span at residues 412-432 (DHLTICIMGLQLLTGIFGLII).

The protein belongs to the glycosyltransferase 4 family. The cofactor is Mg(2+).

It is found in the endoplasmic reticulum membrane. The catalysed reaction is a di-trans,poly-cis-dolichyl phosphate + UDP-N-acetyl-alpha-D-glucosamine = an N-acetyl-alpha-D-glucosaminyl-diphospho-di-trans,poly-cis-dolichol + UMP. The protein operates within protein modification; protein glycosylation. Inhibited by natural nucleoside antibiotic tunicamycin, which acts as a structural analog and competitor of UDP-GlcNAc. Functionally, UDP-N-acetylglucosamine--dolichyl-phosphate N-acetylglucosaminephosphotransferase that operates in the biosynthetic pathway of dolichol-linked oligosaccharides, the glycan precursors employed in protein asparagine (N)-glycosylation. The assembly of dolichol-linked oligosaccharides begins on the cytosolic side of the endoplasmic reticulum membrane and finishes in its lumen. The sequential addition of sugars to dolichol pyrophosphate produces dolichol-linked oligosaccharides containing fourteen sugars, including two GlcNAcs, nine mannoses and three glucoses. Once assembled, the oligosaccharide is transferred from the lipid to nascent proteins by oligosaccharyltransferases. Catalyzes the initial step of dolichol-linked oligosaccharide biosynthesis, transfering GlcNAc-1-P from cytosolic UDP-GlcNAc onto the carrier lipid dolichyl phosphate (P-dolichol), yielding GlcNAc-P-P-dolichol embedded in the cytoplasmic leaflet of the endoplasmic reticulum membrane. In Schizosaccharomyces pombe (strain 972 / ATCC 24843) (Fission yeast), this protein is UDP-N-acetylglucosamine--dolichyl-phosphate N-acetylglucosaminephosphotransferase (gpt2).